The chain runs to 154 residues: Cytochrome c' (154 aa).

Positions 1 to 23 (MKHVLASTAAGLMALGLASSAIA) are cleaved as a signal peptide. Heme c contacts are provided by R35, Q36, R95, C144, C147, and H148.

As to quaternary structure, homodimer. Post-translationally, binds 1 heme c group covalently per subunit.

In terms of biological role, cytochrome c' is the most widely occurring bacterial c-type cytochrome. Cytochromes c' are high-spin proteins and the heme has no sixth ligand. Their exact function is not known. This chain is Cytochrome c' (cycA), found in Allochromatium vinosum (strain ATCC 17899 / DSM 180 / NBRC 103801 / NCIMB 10441 / D) (Chromatium vinosum).